The following is a 207-amino-acid chain: Zinc finger protein JAGGED-like (207 aa).

Residues 1 to 16 show a composition bias toward low complexity; it reads MRADENNTLDLNNLPD. The segment at 1–20 is disordered; the sequence is MRADENNTLDLNNLPDDPSR. The C2H2-type zinc finger occupies 50-72; that stretch reads YECRFCSLKFFKSQALGGHMNRH.

As to expression, expressed in the emerging leaf, stamen and carpel primordia. Not expressed in the apical shoot meristem (SAM).

It localises to the nucleus. In terms of biological role, acts with JAG to promote growth and patterning in stamens and carpels. Promotes the growth of the abaxial and adaxial sides of floral organs. Promotes the growth of the pollen-bearing microsporangia in anthers, the carpel walls of the gynoecium and the establishment of the correct number of cell layers in carpel walls. Promotes leaf blade growth and trichome development. This Arabidopsis thaliana (Mouse-ear cress) protein is Zinc finger protein JAGGED-like (JGL).